The sequence spans 1787 residues: ATP-dependent RNA helicase DEAH11, chloroplastic (1787 aa).

Residues 1 to 33 (MRNSFPPSDGGRSTTDRRQQSFPSSSTNRYNSR) constitute a chloroplast transit peptide. The tract at residues 1-75 (MRNSFPPSDG…DRAPSSGFSP (75 aa)) is disordered. Residues 20-60 (QSFPSSSTNRYNSRSAQSSPPLNHCTTWNQQHSQYHNTNFP) show a composition bias toward polar residues. The 165-residue stretch at 313 to 477 (LKKIHCEQIM…LFDCGILHVN (165 aa)) folds into the Helicase ATP-binding domain. ATP is bound at residue 326–333 (GETGSGKS). The short motif at 424–427 (DEAH) is the DEAH box element. The 167-residue stretch at 507 to 673 (DVVKMAVEIH…VALLRMLALG (167 aa)) folds into the Helicase C-terminal domain. Positions 1557 to 1764 (IELECPICLS…EPCYAHLRTI (208 aa)) are TRIAD supradomain. Zn(2+) is bound by residues C1561, C1564, C1577, H1579, C1582, C1585, C1604, C1609, C1649, C1654, C1672, C1675, C1680, C1683, H1688, C1693, C1719, and C1722. The RING-type 1 zinc finger occupies 1561-1609 (CPICLSEVDDGYSLEGCSHLFCKACLLEQFEASMRNFDAFPILCSHIDC). The IBR-type zinc finger occupies 1628 to 1693 (DELISASLSA…HLEYHPLITC (66 aa)). The RING-type 2; atypical zinc finger occupies 1719–1747 (CPICKSTIEKTDGCNHLQCRCGKHICWTC). C1732 is an active-site residue. Zn(2+)-binding residues include C1737 and C1739.

The protein belongs to the DEAD box helicase family. DEAH subfamily.

It localises to the plastid. Its subcellular location is the chloroplast. The enzyme catalyses ATP + H2O = ADP + phosphate + H(+). The polypeptide is ATP-dependent RNA helicase DEAH11, chloroplastic (Arabidopsis thaliana (Mouse-ear cress)).